The primary structure comprises 525 residues: MSDSFSARLEAAVSALPARFPGPGGAVAVLKDGEVLVRHGWGYANVERRIPFTPSTLFRMCSITKQFTCGTLLDLYDDPSELDADVDARLPQLDEPSPGMLHLAHNQSGLRDYWAVAMLHGAPIEGYFGDREARRVIDGTRTLQFQPGTSYSYVNQNFRLISDILQDRTGRSFAELLQTSIFNPVGMERAILAAETRAMPDGTVGYEGSVESGFRPAINNIWWTGDAGLGASLDDMIAWERFIDETRDAPDSLYRRLTVPVTFSDGQPAPYGFGLQRTKMFGRDVTMHGGALRGWRSHRLHVASERLSVVVMFNHMSAAQVASAQILAAALGVPYEPERSTQQPTALYGTYLERETGLSARIEPAPGGAKLRYLMVPELLEGISATRAEAGSVVVKAQETAEGAEAVMERPGENRTSILARCDETPGEDIAELAGVYRCEELDEAEVTIELAGGVVYGGFSGILGDGRMEMLQRLAKDVWVLPCPRALDHTAPGDWTLAFERQGGSVTAVRVGCWLARDLMYQRV.

Ser62 functions as the Nucleophile in the catalytic mechanism. Catalysis depends on Lys65, which acts as the Proton donor/acceptor. The interval 485–495 (PRALDHTAPGD) is important for specificity. Residue Asp489 coordinates substrate.

Belongs to the peptidase S12 family. In terms of assembly, homodimer.

It catalyses the reaction Release of an N-terminal D-amino acid from a peptide, Xaa-|-Yaa-, in which Xaa is preferably D-Ala, D-Ser or D-Thr. D-amino acid amides and methyl esters also are hydrolyzed, as is glycine amide.. Its activity is regulated as follows. Inhibited by beta-lactam compounds such as 6-aminopenicillic acid, 7-aminocephalosporanic acid, benzylpenicillin and ampicillin. Inhibited by p-chloromercuribenzoate. In terms of biological role, hydrolyzes N-terminal residues in D-amino acid-containing peptides. The protein is D-aminopeptidase of Gluconobacter oxydans (strain 621H) (Gluconobacter suboxydans).